Reading from the N-terminus, the 215-residue chain is MGARSSQTVDPVLSRRYSSESETVLVVRRRPPMVNGGGFVVSNSKQVVVFRVDGCGVLGTKGKLLLRNGDGNDLLLIRKMGGIVQALNMVHNKWEGFGYDNEGTERLVFTLKDPKDSCLVQNSSIKILVHGKPPKISSTRNNYVEIKGSFAERACNIMDSDGKAIAKVRIEKEMEEMVGNKKDLYHVIVKPNVDQSFIVGLIAILDYIHGESTIC.

Residue G2 is the site of N-myristoyl glycine attachment.

This sequence belongs to the LOR family.

In terms of biological role, might be related to the phospholipid scramblase and tubby-like superfamily of membrane tethered transcription factors. The sequence is that of Protein LURP-one-related 16 from Arabidopsis thaliana (Mouse-ear cress).